A 596-amino-acid polypeptide reads, in one-letter code: Sodium/mannose cotransporter SLC5A10 (596 aa).

At 1 to 15 the chain is on the extracellular side; sequence MAANSTSDLHTPGTQ. Asn4 carries an N-linked (GlcNAc...) asparagine glycan. Residues 16–36 traverse the membrane as a helical segment; sequence LSVADIIVITVYFALNVAVGI. Over 37–72 the chain is Cytoplasmic; sequence WSSCRASRNTVNGYFLAGRDMTWWPIGASLFASSEG. The chain crosses the membrane as a helical span at residues 73–93; the sequence is SGLFIGLAGSGAAGGLAVAGF. Over 94–99 the chain is Extracellular; that stretch reads EWNATY. N-linked (GlcNAc...) asparagine glycosylation occurs at Asn96. Residues 100-120 form a helical membrane-spanning segment; the sequence is VLLALAWVFVPIYISSEIVTL. At 121-149 the chain is on the cytoplasmic side; that stretch reads PEYIQKRYGGQRIRMYLSVLSLLLSVFTK. Phosphoserine is present on residues Ser141 and Ser145. At Thr148 the chain carries Phosphothreonine. Residues 150–170 form a helical membrane-spanning segment; the sequence is ISLDLYAGALFVHICLGWNFY. The Extracellular portion of the chain corresponds to 171 to 173; sequence LST. Residues 174–194 form a helical membrane-spanning segment; that stretch reads ILTLGITALYTIAGGLAAVIY. Residues 195–200 are Cytoplasmic-facing; it reads TDALQT. Residues 201-221 form a helical membrane-spanning segment; it reads LIMVVGAVILTIKAFDQIGGY. Topologically, residues 222–264 are extracellular; sequence GQLEAAYAQAIPSRTIANTTCHLPRTDAMHMFRDPHTGDLPWT. The helical transmembrane segment at 265-285 threads the bilayer; that stretch reads GMTFGLTIMATWYWCTDQVIV. Residues 286–300 lie on the Cytoplasmic side of the membrane; it reads QRSLSARDLNHAKAG. Residues 301 to 321 form a helical membrane-spanning segment; it reads SILASYLKMLPMGLIIMPGMI. At 322–355 the chain is on the extracellular side; that stretch reads SRALFPDDVGCVVPSECLRACGAEVGCSNIAYPK. The helical transmembrane segment at 356–376 threads the bilayer; the sequence is LVMELMPIGLRGLMIAVMLAA. The Cytoplasmic segment spans residues 377-409; sequence LMSSLTSIFNSSSTLFTMDIWRRLRPRSGEREL. The chain crosses the membrane as a helical span at residues 410–430; the sequence is LLVGRLVIVALIGVSVAWIPV. The Extracellular portion of the chain corresponds to 431–443; it reads LQDSNSGQLFIYM. A helical transmembrane segment spans residues 444–464; the sequence is QSVTSSLAPPVTAVFVLGVFW. Residues 465-471 are Cytoplasmic-facing; the sequence is RRANEQG. Residues 472 to 492 traverse the membrane as a helical segment; that stretch reads AFWGLIAGLVVGATRLVLEFL. Residues 493–513 lie on the Extracellular side of the membrane; sequence NPAPPCGEPDTRPAVLGSIHY. The helical transmembrane segment at 514–534 threads the bilayer; that stretch reads LHFAVALFALSGAVVVAGSLL. Residues 535-575 are Cytoplasmic-facing; that stretch reads TPPPQSVQIENLTWWTLAQDVPLGTKAGDGQTPQKHAFWAR. Residues 576–596 traverse the membrane as a helical segment; the sequence is VCGFNAILLMCVNIFFYAYFA.

Belongs to the sodium:solute symporter (SSF) (TC 2.A.21) family. Predominantly expressed at high levels in kidney. Very low expression is detected in testes. As to expression, expressed in kidney. In terms of tissue distribution, the most abundant isoform expressed in kidney.

It localises to the apical cell membrane. It catalyses the reaction D-mannose(out) + Na(+)(out) = D-mannose(in) + Na(+)(in). The catalysed reaction is D-fructopyranose(out) + Na(+)(out) = D-fructopyranose(in) + Na(+)(in). Its activity is regulated as follows. Inhibited by phlorizin. Functionally, electrogenic Na+-coupled sugar symporter that actively transports D-mannose or D-fructose at the plasma membrane, with a Na+ to sugar coupling ratio of 1:1. Transporter activity is driven by a transmembrane Na+ electrochemical gradient set by the Na+/K+ pump. Exclusively recognizes sugar substrates having a pyranose ring with an axial hydroxyl group on carbon 2. Has likely evolved to enable renal reabsorption of D-mannose, an important constituent of oligosaccharide chains of glycoproteins. Contributes to dietary D-fructose reabsorption from glomerular filtrate across the brush border of the kidney. Its function is as follows. Appears to have no transporter activity. This Homo sapiens (Human) protein is Sodium/mannose cotransporter SLC5A10 (SLC5A10).